The chain runs to 289 residues: Diaminopimelate epimerase (289 aa).

Positions 13, 47, and 67 each coordinate substrate. Cysteine 76 acts as the Proton donor in catalysis. Substrate contacts are provided by residues 77-78, asparagine 167, asparagine 200, and 218-219; these read GN and ER. Cysteine 227 (proton acceptor) is an active-site residue. 228-229 lines the substrate pocket; the sequence is GT.

The protein belongs to the diaminopimelate epimerase family. Homodimer.

The protein localises to the cytoplasm. It catalyses the reaction (2S,6S)-2,6-diaminopimelate = meso-2,6-diaminopimelate. It participates in amino-acid biosynthesis; L-lysine biosynthesis via DAP pathway; DL-2,6-diaminopimelate from LL-2,6-diaminopimelate: step 1/1. Functionally, catalyzes the stereoinversion of LL-2,6-diaminopimelate (L,L-DAP) to meso-diaminopimelate (meso-DAP), a precursor of L-lysine and an essential component of the bacterial peptidoglycan. In Burkholderia pseudomallei (strain K96243), this protein is Diaminopimelate epimerase.